Here is a 312-residue protein sequence, read N- to C-terminus: Putative tricarboxylate transport protein, mitochondrial (312 aa).

Solcar repeat units lie at residues 23-111 (EKTV…LKSQ), 122-208 (VMRL…LKDW), and 218-303 (ISKP…IIEF). Helical transmembrane passes span 29–49 (IVIGGITGGIEICITFPTEYV), 75–95 (VNGHGFFGLYRGLSVLLYGSI), 126–146 (LCGLGAGLSEAVFAVTPMETV), 164–184 (FVHGVGCIVKAEGLGGIYKGV), 221–241 (PIVGLMGAVAGAASVYGNTPI), and 286–306 (VCLDVGITFMIYDSIIEFLDV).

Belongs to the mitochondrial carrier (TC 2.A.29) family.

It localises to the mitochondrion inner membrane. Functionally, transport of citrate across inner mitochondrial membrane. In Caenorhabditis elegans, this protein is Putative tricarboxylate transport protein, mitochondrial.